Consider the following 100-residue polypeptide: Ribosomal biogenesis factor (100 aa).

Phosphoserine is present on serine 19. Lysine 21 is subject to N6-acetyllysine. At serine 69 the chain carries Phosphoserine.

As to quaternary structure, associates with the pre-60S ribosomal particles.

The protein resides in the nucleus. Its subcellular location is the nucleolus. Its function is as follows. Trans-acting factor in ribosome biogenesis required for efficient 40S and 60S subunit production. This chain is Ribosomal biogenesis factor (RBIS), found in Bos taurus (Bovine).